The following is a 219-amino-acid chain: Histone H1.4 (219 aa).

A compositionally biased stretch (low complexity) spans 1-15 (MSETAPAAPAAPAPA). The segment at 1–41 (MSETAPAAPAAPAPAEKTPIKKKARKAAGGAKRKASGPPVS) is disordered. Ser-2 is subject to N-acetylserine. Residue Ser-2 is modified to Phosphoserine. The residue at position 17 (Lys-17) is an N6-acetyllysine. Thr-18 carries the post-translational modification Phosphothreonine. The segment covering 20–35 (IKKKARKAAGGAKRKA) has biased composition (basic residues). The residue at position 26 (Lys-26) is an N6-acetyllysine; alternate. N6-methyllysine; alternate is present on Lys-26. At Lys-34 the chain carries N6-(beta-hydroxybutyryl)lysine; alternate. Lys-34 is modified (N6-succinyllysine; alternate). Phosphoserine is present on Ser-36. Residues 36-109 (SGPPVSELIT…GASGSFKLNK (74 aa)) enclose the H15 domain. Lys-52 carries the N6-(beta-hydroxybutyryl)lysine modification. Arg-54 is subject to Citrulline. An N6-(beta-hydroxybutyryl)lysine mark is found at Lys-64, Lys-85, Lys-90, and Lys-106. The interval 92-219 (TLVQTKGTGA…KPKKTAAKKK (128 aa)) is disordered. Over residues 119–140 (KAKKAGAAKAKKPAGAAKKPKK) the composition is skewed to basic residues. A Phosphothreonine modification is found at Thr-146. Composition is skewed to basic residues over residues 149 to 160 (KSTKKTPKKAKK) and 168 to 185 (KKAK…KKAP). ADP-ribosylserine is present on Ser-150. A Phosphoserine modification is found at Ser-187. A compositionally biased stretch (basic residues) spans 192–219 (RAVKPKAAKPKTSKPKAAKPKKTAAKKK).

It belongs to the histone H1/H5 family. Post-translationally, H1 histones are progressively phosphorylated during the cell cycle, becoming maximally phosphorylated during late G2 phase and M phase, and being dephosphorylated sharply thereafter. Acetylated at Lys-26. Deacetylated at Lys-26 by SIRT1. In terms of processing, citrullination at Arg-54 (H1R54ci) by PADI4 takes place within the DNA-binding site of H1 and results in its displacement from chromatin and global chromatin decondensation, thereby promoting pluripotency and stem cell maintenance. Post-translationally, ADP-ribosylated on Ser-150 in response to DNA damage.

It localises to the nucleus. It is found in the chromosome. Histone H1 protein binds to linker DNA between nucleosomes forming the macromolecular structure known as the chromatin fiber. Histones H1 are necessary for the condensation of nucleosome chains into higher-order structured fibers. Also acts as a regulator of individual gene transcription through chromatin remodeling, nucleosome spacing and DNA methylation. In Rattus norvegicus (Rat), this protein is Histone H1.4.